The chain runs to 450 residues: MRTWIAILAVVLVLLLNACTDGPEDGPRLEHPDETGVLRVVTRNSATTYYLDRHERAVGPEVALVEAFADHRGWTVDWTVAATTAEVLDYLEAGAAHLAAAGLTHLDSRNQRFERGPAHTEITQQVVCHRDRTDKPRSPEDLEEVVLKVTAASSYVERLEVLAERYDALTFQEDQRGSEQLLMAVEEGRLACTVADSNIVRLNRRYLPHLDVTMDLTEGQNLGWYLAEGQERLAQQAFEWMNSRAGDEVIAAMENRYYTYVGEFDFVDLRALKRRMESRLPRYQRHFEQAEAETDMPADLLAALAYQESHWDPQARSPTGVRGMMMLTGRTAESLGVNDRLDPEQSIMGGARYLADRHERLPEHIPEPDRTFLALASYNVGRGHLLDARQLARDLGRDPDDWQEMREVLPLLSDERYYPNLRYGYARGYEPVHFVARIRNYRDVIRQAFE.

Residues 1-20 form the signal peptide; it reads MRTWIAILAVVLVLLLNACT. The interval 21-261 is non-LT domain; that stretch reads DGPEDGPRLE…AMENRYYTYV (241 aa). The interval 262–450 is LT domain; the sequence is GEFDFVDLRA…YRDVIRQAFE (189 aa). Glu-308 is a catalytic residue.

It in the N-terminal section; belongs to the bacterial solute-binding protein 3 family. The protein in the C-terminal section; belongs to the transglycosylase Slt family.

Its subcellular location is the cell outer membrane. The enzyme catalyses Exolytic cleavage of the (1-&gt;4)-beta-glycosidic linkage between N-acetylmuramic acid (MurNAc) and N-acetylglucosamine (GlcNAc) residues in peptidoglycan, from either the reducing or the non-reducing ends of the peptidoglycan chains, with concomitant formation of a 1,6-anhydrobond in the MurNAc residue.. Functionally, murein-degrading enzyme that degrades murein glycan strands and insoluble, high-molecular weight murein sacculi, with the concomitant formation of a 1,6-anhydromuramoyl product. Lytic transglycosylases (LTs) play an integral role in the metabolism of the peptidoglycan (PG) sacculus. Their lytic action creates space within the PG sacculus to allow for its expansion as well as for the insertion of various structures such as secretion systems and flagella. The chain is Membrane-bound lytic murein transglycosylase F 2 from Alkalilimnicola ehrlichii (strain ATCC BAA-1101 / DSM 17681 / MLHE-1).